An 850-amino-acid chain; its full sequence is Endoribonuclease ysh-1 (850 aa).

His-83, His-85, Asp-87, His-88, His-173, and Asp-194 together coordinate Zn(2+). His-442 (proton donor) is an active-site residue. Position 464 (His-464) interacts with Zn(2+). Disordered stretches follow at residues 685-708 (VKRSATKNPHTHSPLPADKNPHSH) and 732-784 (SPIV…EQQL). Positions 744–754 (PTTKAITSPSE) are enriched in polar residues. Residues 755–766 (ETAKSSDVKSDA) are compositionally biased toward basic and acidic residues. A compositionally biased stretch (acidic residues) spans 767 to 781 (DADASMDVSEEDEDE).

The protein belongs to the metallo-beta-lactamase superfamily. RNA-metabolizing metallo-beta-lactamase-like family. CPSF2/YSH1 subfamily.

It localises to the nucleus. In terms of biological role, component of the cleavage factor I (CF I) involved in pre-mRNA 3'-end processing. The protein is Endoribonuclease ysh-1 (ysh-1) of Neurospora crassa (strain ATCC 24698 / 74-OR23-1A / CBS 708.71 / DSM 1257 / FGSC 987).